Here is a 74-residue protein sequence, read N- to C-terminus: Translation initiation factor IF-1 (74 aa).

Residues 1–73 (MAKKDDIIEF…TKGRITYRGK (73 aa)) enclose the S1-like domain.

Belongs to the IF-1 family. In terms of assembly, component of the 30S ribosomal translation pre-initiation complex which assembles on the 30S ribosome in the order IF-2 and IF-3, IF-1 and N-formylmethionyl-tRNA(fMet); mRNA recruitment can occur at any time during PIC assembly.

The protein localises to the cytoplasm. Functionally, one of the essential components for the initiation of protein synthesis. Stabilizes the binding of IF-2 and IF-3 on the 30S subunit to which N-formylmethionyl-tRNA(fMet) subsequently binds. Helps modulate mRNA selection, yielding the 30S pre-initiation complex (PIC). Upon addition of the 50S ribosomal subunit IF-1, IF-2 and IF-3 are released leaving the mature 70S translation initiation complex. This chain is Translation initiation factor IF-1, found in Psychrobacter sp. (strain PRwf-1).